Reading from the N-terminus, the 360-residue chain is DNA replication and repair protein RecF (360 aa).

An ATP-binding site is contributed by 33–40 (GENGSGKT).

The protein belongs to the RecF family.

Its subcellular location is the cytoplasm. Functionally, the RecF protein is involved in DNA metabolism; it is required for DNA replication and normal SOS inducibility. RecF binds preferentially to single-stranded, linear DNA. It also seems to bind ATP. The sequence is that of DNA replication and repair protein RecF from Rickettsia conorii (strain ATCC VR-613 / Malish 7).